The chain runs to 488 residues: Prostaglandin E2 receptor EP4 subtype (488 aa).

Over 1 to 19 (MSTPVANASASSMPELLNN) the chain is Extracellular. Asn-7 carries N-linked (GlcNAc...) asparagine glycosylation. A helical membrane pass occupies residues 20–43 (PVTIPAVMFIFGVVGNLVAIVVLC). Over 44-55 (KSRKEQKETTFY) the chain is Cytoplasmic. The chain crosses the membrane as a helical span at residues 56–79 (TLVCGLAVTDLLGTLLVSPVTIAT). The Extracellular segment spans residues 80–96 (YMKGQWPGGQALCDYST). A disulfide bridge links Cys-92 with Cys-170. The chain crosses the membrane as a helical span at residues 97 to 115 (FILLFFGLSGLSIICAMSI). At 116–135 (ERYLAINHAYFYSHYVDKRL) the chain is on the cytoplasmic side. A helical membrane pass occupies residues 136-160 (AGLTLFAVYASNVLFCALPNMGLGR). Topologically, residues 161–184 (SRLQFPDTWCFIDWRTNVTAHAAF) are extracellular. Asn-177 carries an N-linked (GlcNAc...) asparagine glycan. A helical membrane pass occupies residues 185 to 211 (SYMYAGFSSFLILATVLCNVLVCGALL). Over 212–270 (RMHRQFMRRTSLGTEQHHAAAAAAVTSAACRGHPTASPALPRLSDFRRRRSFRRIAGAE) the chain is Cytoplasmic. The helical transmembrane segment at 271–298 (IQMVILLIATSLVVLICSIPLVVRVFIN) threads the bilayer. Over 299–315 (QLYQPDLVREISQNPDL) the chain is Extracellular. Residues 316-335 (QAIRIASVNPILDPWIYILL) traverse the membrane as a helical segment. At 336 to 488 (RKTVLSKAIE…ETLNLSEKCI (153 aa)) the chain is on the cytoplasmic side. A compositionally biased stretch (basic and acidic residues) spans 358 to 371 (RRDRSGQHCSDSRR). The disordered stretch occupies residues 358 to 381 (RRDRSGQHCSDSRRTSSAMSTHSR). Residues 372-381 (TSSAMSTHSR) show a composition bias toward polar residues. 4 positions are modified to phosphoserine: Ser-377, Ser-380, Ser-382, and Ser-385. The segment at 456-475 (EVGGGGRAGPTPKGSSLQVT) is disordered.

This sequence belongs to the G-protein coupled receptor 1 family. As to quaternary structure, interacts with FEM1A. Post-translationally, phosphorylation mediates agonist-mediated desensitization by promoting cytoplasmic retention. In terms of tissue distribution, highly expressed in intestine, duodenal epithelium, uterus, thymus and adrenal cortex. Lower but significant expression in whole adrenal, lung, spleen, stomach, and kidney. In this latter organ, the receptor is localized in the glomeruli and the transitional epithelium of the renal calyx.

It is found in the cell membrane. In terms of biological role, receptor for prostaglandin E2 (PGE2). The activity of this receptor is mediated by G(s) proteins that stimulate adenylate cyclase. Has a relaxing effect on smooth muscle. May play an important role in regulating renal hemodynamics, intestinal epithelial transport, adrenal aldosterone secretion, and uterine function. In Oryctolagus cuniculus (Rabbit), this protein is Prostaglandin E2 receptor EP4 subtype (PTGER4).